The following is a 227-amino-acid chain: Ribonuclease HII (227 aa).

In terms of domain architecture, RNase H type-2 spans 16–205 (SLLAGVDEVG…VKMALDAVGV (190 aa)). D22, E23, and D114 together coordinate a divalent metal cation.

The protein belongs to the RNase HII family. Mn(2+) is required as a cofactor. The cofactor is Mg(2+).

It localises to the cytoplasm. The enzyme catalyses Endonucleolytic cleavage to 5'-phosphomonoester.. Its function is as follows. Endonuclease that specifically degrades the RNA of RNA-DNA hybrids. The chain is Ribonuclease HII from Marinobacter nauticus (strain ATCC 700491 / DSM 11845 / VT8) (Marinobacter aquaeolei).